Consider the following 117-residue polypeptide: Cell division protein FtsB (117 aa).

The Cytoplasmic segment spans residues 1-6 (MRDWRW). The chain crosses the membrane as a helical span at residues 7-24 (MLLVLALLLGWLQYRFWF). Residues 25 to 117 (GPGNSGEVMM…QVGEHPADVP (93 aa)) lie on the Periplasmic side of the membrane. Residues 29–69 (SGEVMMLEAQVTNQERDNEGLQQRNDALAAEVKDLKEGQSA) are a coiled coil.

This sequence belongs to the FtsB family. As to quaternary structure, part of a complex composed of FtsB, FtsL and FtsQ.

Its subcellular location is the cell inner membrane. Functionally, essential cell division protein. May link together the upstream cell division proteins, which are predominantly cytoplasmic, with the downstream cell division proteins, which are predominantly periplasmic. This Stenotrophomonas maltophilia (strain R551-3) protein is Cell division protein FtsB.